Here is a 101-residue protein sequence, read N- to C-terminus: MTPFNPDSIGDYVTLLGVAFLTFSVPAWFTGRARKHSSDIGEIKEQVCNTHDTNLRDDLDSVKADISDLKEIVLQGFHQVNESINLERRERIEGDRRKEVA.

This chain is Gene 30 protein (30), found in Mycobacterium phage L5 (Mycobacteriophage L5).